A 122-amino-acid polypeptide reads, in one-letter code: Large ribosomal subunit protein uL14 (122 aa).

Belongs to the universal ribosomal protein uL14 family. Part of the 50S ribosomal subunit. Forms a cluster with proteins L3 and L19. In the 70S ribosome, L14 and L19 interact and together make contacts with the 16S rRNA in bridges B5 and B8.

In terms of biological role, binds to 23S rRNA. Forms part of two intersubunit bridges in the 70S ribosome. This Campylobacter hominis (strain ATCC BAA-381 / DSM 21671 / CCUG 45161 / LMG 19568 / NCTC 13146 / CH001A) protein is Large ribosomal subunit protein uL14.